A 341-amino-acid polypeptide reads, in one-letter code: Phosphoribosylformylglycinamidine cyclo-ligase (341 aa).

This sequence belongs to the AIR synthase family.

Its subcellular location is the cytoplasm. The enzyme catalyses 2-formamido-N(1)-(5-O-phospho-beta-D-ribosyl)acetamidine + ATP = 5-amino-1-(5-phospho-beta-D-ribosyl)imidazole + ADP + phosphate + H(+). Its pathway is purine metabolism; IMP biosynthesis via de novo pathway; 5-amino-1-(5-phospho-D-ribosyl)imidazole from N(2)-formyl-N(1)-(5-phospho-D-ribosyl)glycinamide: step 2/2. The chain is Phosphoribosylformylglycinamidine cyclo-ligase from Xanthomonas oryzae pv. oryzae (strain MAFF 311018).